Here is a 220-residue protein sequence, read N- to C-terminus: Urease accessory protein UreF (220 aa).

It belongs to the UreF family. In terms of assembly, ureD, UreF and UreG form a complex that acts as a GTP-hydrolysis-dependent molecular chaperone, activating the urease apoprotein by helping to assemble the nickel containing metallocenter of UreC. The UreE protein probably delivers the nickel.

It is found in the cytoplasm. Its function is as follows. Required for maturation of urease via the functional incorporation of the urease nickel metallocenter. The protein is Urease accessory protein UreF of Jannaschia sp. (strain CCS1).